We begin with the raw amino-acid sequence, 479 residues long: Replication factor C large subunit (479 aa).

Gly43 to Thr50 lines the ATP pocket. Residues Glu441 to Ser479 form a disordered region. The segment covering Glu452 to Arg463 has biased composition (basic and acidic residues).

The protein belongs to the activator 1 small subunits family. RfcL subfamily. Heteropentamer composed of four small subunits (RfcS) and one large subunit (RfcL). Both subunits interact with PCNA.

Functionally, part of the RFC clamp loader complex which loads the PCNA sliding clamp onto DNA. The complex possesses DNA-dependent ATPase activity which is further stimulated by PCNA. This Archaeoglobus fulgidus (strain ATCC 49558 / DSM 4304 / JCM 9628 / NBRC 100126 / VC-16) protein is Replication factor C large subunit (rfcL).